The following is a 470-amino-acid chain: UDP-glycosyltransferase 75C1 (470 aa).

Catalysis depends on H16, which acts as the Proton acceptor. H16 lines the an anthocyanidin pocket. Q347, H362, W365, N366, S367, E370, D386, and Q387 together coordinate UDP-alpha-D-glucose.

Belongs to the UDP-glycosyltransferase family. Expressed in flowers and fruits, especially in pulp, and, at lower levels, in seeds.

Its subcellular location is the cytoplasm. It is found in the nucleus. The enzyme catalyses 2-cis-(+)-abscisate + UDP-alpha-D-glucose = beta-D-glucopyranosyl cis-(+)-abscisate + UDP. The catalysed reaction is (indol-3-yl)acetate + UDP-alpha-D-glucose = 1-O-(indol-3-ylacetyl)-beta-D-glucose + UDP. Functionally, glucosyltransferase acting on both abscisic acid (ABA) and auxin (IAA). Required for ABA-mediated fruit ripening, seed germination, and negative responses to drought. The protein is UDP-glycosyltransferase 75C1 of Solanum lycopersicum (Tomato).